Here is a 505-residue protein sequence, read N- to C-terminus: Trans-cinnamate 4-monooxygenase (505 aa).

Residues 3–23 (LLLLEKTLLGLFLAAVVAIVV) traverse the membrane as a helical segment. (E)-cinnamate contacts are provided by residues 213 to 218 (RSRLAQ) and Ala-306. A heme-binding site is contributed by Cys-447.

It belongs to the cytochrome P450 family. Heme is required as a cofactor.

The protein localises to the membrane. The enzyme catalyses (E)-cinnamate + reduced [NADPH--hemoprotein reductase] + O2 = (E)-4-coumarate + oxidized [NADPH--hemoprotein reductase] + H2O + H(+). The protein operates within phenylpropanoid metabolism; trans-4-coumarate biosynthesis; trans-4-coumarate from trans-cinnamate: step 1/1. In terms of biological role, catalyzes the first oxidative step of the phenylpropanoid pathway in higher plants by transforming trans-cinnamate into p-coumarate. The compounds formed by this pathway are essential components for lignification, pollination, and defense against ultraviolet light, predators and pathogens. The polypeptide is Trans-cinnamate 4-monooxygenase (CYP73A2) (Vigna radiata var. radiata (Mung bean)).